Reading from the N-terminus, the 131-residue chain is Sperm microtubule inner protein 11 (131 aa).

The disordered stretch occupies residues 18-44; the sequence is KKRNTTEETNQKEPEPTRLPPIISKDG. The segment covering 21-33 has biased composition (basic and acidic residues); it reads NTTEETNQKEPEP.

As to quaternary structure, microtubule inner protein component of sperm flagellar doublet microtubules.

It localises to the cytoplasm. The protein resides in the cytoskeleton. The protein localises to the flagellum axoneme. Its function is as follows. Microtubule inner protein (MIP) part of the dynein-decorated doublet microtubules (DMTs) in flagellum axoneme. May serve to reinforce and thus stabilize the microtubule structure in the sperm flagella. This Homo sapiens (Human) protein is Sperm microtubule inner protein 11.